The chain runs to 316 residues: Meiotically up-regulated gene 154 protein (316 aa).

Transmembrane regions (helical) follow at residues 41 to 61 (YSIP…IYIK), 88 to 108 (AFLS…FIFS), 159 to 179 (FLLN…WFYS), and 186 to 206 (LLTF…SLLL). The segment at 291–316 (HDSGISRDSSSPFKRFPHLSDGSSRF) is disordered.

It is found in the endoplasmic reticulum membrane. In terms of biological role, has a role in meiosis. The protein is Meiotically up-regulated gene 154 protein (mug154) of Schizosaccharomyces pombe (strain 972 / ATCC 24843) (Fission yeast).